The following is a 119-amino-acid chain: Small ribosomal subunit protein uS10 (119 aa).

It belongs to the universal ribosomal protein uS10 family. Component of the small ribosomal subunit. Mature ribosomes consist of a small (40S) and a large (60S) subunit. The 40S subunit contains about 32 different proteins and 1 molecule of RNA (18S). The 60S subunit contains 45 different proteins and 3 molecules of RNA (25S, 5.8S and 5S).

The protein localises to the cytoplasm. Functionally, component of the ribosome, a large ribonucleoprotein complex responsible for the synthesis of proteins in the cell. The small ribosomal subunit (SSU) binds messenger RNAs (mRNAs) and translates the encoded message by selecting cognate aminoacyl-transfer RNA (tRNA) molecules. The large subunit (LSU) contains the ribosomal catalytic site termed the peptidyl transferase center (PTC), which catalyzes the formation of peptide bonds, thereby polymerizing the amino acids delivered by tRNAs into a polypeptide chain. The nascent polypeptides leave the ribosome through a tunnel in the LSU and interact with protein factors that function in enzymatic processing, targeting, and the membrane insertion of nascent chains at the exit of the ribosomal tunnel. The polypeptide is Small ribosomal subunit protein uS10 (RPS20) (Candida albicans (strain SC5314 / ATCC MYA-2876) (Yeast)).